Here is a 140-residue protein sequence, read N- to C-terminus: MATERTFSIIKPDATRRNLTGAITAKLEEAGLRVVASKRIHMTKEQAEGFYGVHRERPFFGDLVSFMISGPVVVQVLEGENAVARNREVMGATNPANADEGTIRKTFAESIEANSVHGSDSAENAKIEIDFFFKPEEIVG.

6 residues coordinate ATP: Lys11, Phe59, Arg87, Thr93, Arg104, and Asn114. His117 serves as the catalytic Pros-phosphohistidine intermediate.

This sequence belongs to the NDK family. In terms of assembly, homotetramer. Requires Mg(2+) as cofactor.

The protein localises to the cytoplasm. It carries out the reaction a 2'-deoxyribonucleoside 5'-diphosphate + ATP = a 2'-deoxyribonucleoside 5'-triphosphate + ADP. The enzyme catalyses a ribonucleoside 5'-diphosphate + ATP = a ribonucleoside 5'-triphosphate + ADP. Major role in the synthesis of nucleoside triphosphates other than ATP. The ATP gamma phosphate is transferred to the NDP beta phosphate via a ping-pong mechanism, using a phosphorylated active-site intermediate. The sequence is that of Nucleoside diphosphate kinase from Rhizorhabdus wittichii (strain DSM 6014 / CCUG 31198 / JCM 15750 / NBRC 105917 / EY 4224 / RW1) (Sphingomonas wittichii).